A 270-amino-acid chain; its full sequence is Probable septum site-determining protein MinC (270 aa).

A disordered region spans residues D105 to A129. Over residues E116–A129 the composition is skewed to low complexity.

It belongs to the MinC family. As to quaternary structure, interacts with MinD and FtsZ.

Cell division inhibitor that blocks the formation of polar Z ring septums. Rapidly oscillates between the poles of the cell to destabilize FtsZ filaments that have formed before they mature into polar Z rings. Prevents FtsZ polymerization. This Burkholderia mallei (strain NCTC 10247) protein is Probable septum site-determining protein MinC.